Here is a 519-residue protein sequence, read N- to C-terminus: Membrane protein insertase YidC (519 aa).

6 helical membrane-spanning segments follow: residues 6–26, 298–318, 324–344, 390–410, 434–454, and 471–491; these read ILFV…FAQP, VDFG…VFFY, YGWA…PLTL, LGGC…FTML, FMQF…IGMF, and IMYI…SGLV.

The protein belongs to the OXA1/ALB3/YidC family. Type 1 subfamily. Interacts with the Sec translocase complex via SecD. Specifically interacts with transmembrane segments of nascent integral membrane proteins during membrane integration.

Its subcellular location is the cell inner membrane. Required for the insertion and/or proper folding and/or complex formation of integral membrane proteins into the membrane. Involved in integration of membrane proteins that insert both dependently and independently of the Sec translocase complex, as well as at least some lipoproteins. Aids folding of multispanning membrane proteins. This is Membrane protein insertase YidC from Endomicrobium trichonymphae.